The primary structure comprises 356 residues: Zinc finger CCCH domain-containing protein 49 (356 aa).

C3H1-type zinc fingers lie at residues 120–146 (YSGTACPDFRKGGCKKGDSCEFAHGVF) and 155–177 (YRTQPCKDGGNCLRKICFFAHSP). A disordered region spans residues 209 to 235 (ISPVSGSPPMSPRADSESSPMTQSLSR). Positions 225-235 (ESSPMTQSLSR) are enriched in polar residues.

The polypeptide is Zinc finger CCCH domain-containing protein 49 (Arabidopsis thaliana (Mouse-ear cress)).